A 254-amino-acid polypeptide reads, in one-letter code: Sec-independent protein translocase protein TatC (254 aa).

6 helical membrane passes run 40–60 (IFLS…FVKP), 82–104 (FFFV…FILY), 125–145 (VVLG…YALI), 172–192 (FVLL…IQVV), 210–230 (FVIL…DPLT), and 233–253 (LLAG…RLLG).

Belongs to the TatC family. Forms a complex with TatA.

The protein resides in the cell inner membrane. Its function is as follows. Part of the twin-arginine translocation (Tat) system that transports large folded proteins containing a characteristic twin-arginine motif in their signal peptide across membranes. This chain is Sec-independent protein translocase protein TatC, found in Synechocystis sp. (strain ATCC 27184 / PCC 6803 / Kazusa).